Consider the following 255-residue polypeptide: uncharacterized protein (255 aa).

This is an uncharacterized protein from Acanthamoeba polyphaga mimivirus (APMV).